We begin with the raw amino-acid sequence, 21 residues long: Natriuretic peptide TsNP (21 aa).

Residues Cys5 and Cys21 are joined by a disulfide bond.

In terms of tissue distribution, expressed by the venom gland.

Its subcellular location is the secreted. Scorpion venom natriuretic peptide that increases the perfusion pressure, glomerular filtration rate and urinary flow in the isolated perfused rat kidney assay. Induces a decrease of the percentages of renal transport for sodium, potassium and chloride and an increase of the urinary cGMP concentration. Also down-regulates the mRNA expression of natriuretic peptide receptor 1 (NPR1) in the kidneys whereas it up-regulates those of NPR2, NPR3 and guanylyl cyclase C (GUCY2C) mRNAs. May exhibit hypotensive and vasodepressor activities. The protein is Natriuretic peptide TsNP of Tityus serrulatus (Brazilian scorpion).